The primary structure comprises 217 residues: Putative thymidylate synthase (217 aa).

Cysteine 139 is an active-site residue.

The protein belongs to the thymidylate synthase family. Archaeal-type ThyA subfamily. Monomer.

The protein localises to the cytoplasm. The protein operates within pyrimidine metabolism; dTTP biosynthesis. Functionally, may catalyze the biosynthesis of dTMP using an unknown cosubstrate. The chain is Putative thymidylate synthase from Methanosarcina acetivorans (strain ATCC 35395 / DSM 2834 / JCM 12185 / C2A).